Consider the following 90-residue polypeptide: Lectin-1 (90 aa).

Q1 carries the post-translational modification Pyrrolidone carboxylic acid. C46 and C71 are joined by a disulfide.

In terms of processing, the N-terminus is blocked. Contains seven disulfide bonds. Post-translationally, proteolytically cleaved. Major mature form may consist of cleaved, disulfide-bonded N-terminal and C-terminal chains.

Functionally, lectin with specificity for complex N-linked glycans and O-linked glycans. Has hemagglutinating activity towards rabbit erythrocytes. The protein is Lectin-1 of Hypnea musciformis (Red alga).